Consider the following 82-residue polypeptide: RNA-binding protein Hfq (82 aa).

The region spanning 9–69 (DHFLNQLRKE…ISTFSPARNV (61 aa)) is the Sm domain.

The protein belongs to the Hfq family. Homohexamer.

RNA chaperone that binds small regulatory RNA (sRNAs) and mRNAs to facilitate mRNA translational regulation in response to envelope stress, environmental stress and changes in metabolite concentrations. Also binds with high specificity to tRNAs. The chain is RNA-binding protein Hfq from Exiguobacterium sp. (strain ATCC BAA-1283 / AT1b).